The chain runs to 611 residues: Protein KINASE OF THE OUTER CHLOROPLAST MEMBRANE 1 (611 aa).

The Cytoplasmic segment spans residues 1-555 (MASKIIAGKP…LEDFHWAVRP (555 aa)). In terms of domain architecture, Protein kinase spans 39-306 (LKLRHRIGRG…TDILLVLKSL (268 aa)). Residues 45 to 53 (IGRGPFGDV) and K74 contribute to the ATP site. A helical membrane pass occupies residues 556 to 572 (LLIAMGLLTAMKLGICV). The Chloroplast intermembrane portion of the chain corresponds to 573-611 (RKKIGRSKDGKQRDGSTGQGDCKIPDGKGSDKSKWLVFF). The segment at 579–606 (SKDGKQRDGSTGQGDCKIPDGKGSDKSK) is disordered. Basic and acidic residues predominate over residues 595 to 606 (KIPDGKGSDKSK).

The protein belongs to the protein kinase superfamily. Ser/Thr protein kinase family. As to quaternary structure, associates with the TOC complex containing, at least, translocons at the chloroplast envelope (e.g. TOCs and TICs such as TOC159, TOC75, TOC33 and TIC56).

It is found in the plastid. The protein localises to the chloroplast outer membrane. It carries out the reaction L-seryl-[protein] + ATP = O-phospho-L-seryl-[protein] + ADP + H(+). The enzyme catalyses L-threonyl-[protein] + ATP = O-phospho-L-threonyl-[protein] + ADP + H(+). In terms of biological role, serine/threonine protein kinase acting as a regulatory component of the plastid protein import machinery by phosphorylating import receptors (e.g. the A-domain of TOC159, TOC120 and TOC132). Supports preprotein import and contributes to efficient chloroplast biogenesis, thus being required for survival during de-etiolation. This Arabidopsis thaliana (Mouse-ear cress) protein is Protein KINASE OF THE OUTER CHLOROPLAST MEMBRANE 1.